A 54-amino-acid chain; its full sequence is Photoreceptor disk component PRCD (54 aa).

Cysteine 2 is lipidated: S-palmitoyl cysteine. Residues proline 25–lysine 54 are disordered.

The protein belongs to the PRCD family. Interacts with RHO/rhodopsin; the interaction promotes PRCD stability. Palmitoylated at Cys-2. Palmitoylation is essential for protein stability and trafficking to the photoreceptor outer segment, but does not appear to be essential for membrane localization. Probably palmitoylated by ZDHHC3. Post-translationally, phosphorylated.

It is found in the cell projection. The protein localises to the cilium. The protein resides in the photoreceptor outer segment. Its subcellular location is the membrane. It localises to the endoplasmic reticulum. It is found in the golgi apparatus. Functionally, involved in vision. The polypeptide is Photoreceptor disk component PRCD (Homo sapiens (Human)).